A 2171-amino-acid polypeptide reads, in one-letter code: Mediator of DNA damage checkpoint protein 1 (2171 aa).

The span at 1–19 (MEDTQAIDWDVEEEEETEQ) shows a compositional bias: acidic residues. Residues 1-22 (MEDTQAIDWDVEEEEETEQSSE) are disordered. Residues 1–150 (MEDTQAIDWD…SRGPLTVEET (150 aa)) form an interaction with CHEK2 region. Residues 2 to 220 (EDTQAIDWDV…PFAFNLNSDT (219 aa)) are interaction with the MRN complex. A Phosphothreonine modification is found at Thr4. Residues 54 to 105 (NVVGRMPDCSVALPFPSISKQHAEIEILAWDKAPILRDCGSLNGTQILRPPK) form the FHA domain. Residue Ser108 is modified to Phosphoserine. Residues 145–568 (LTVEETPRVQ…PAKLLVVSLE (424 aa)) form a required for nuclear localization (NLS1) region. Position 146 is a phosphothreonine (Thr146). Residues Ser168, Ser176, Ser196, and Ser218 each carry the phosphoserine modification. Disordered regions lie at residues 185–248 (RTTS…AKQS) and 261–317 (DQPL…AEVH). Residue Thr220 is modified to Phosphothreonine. The span at 261-278 (DQPLVKERDDDTKVKRGA) shows a compositional bias: basic and acidic residues. The residue at position 299 (Ser299) is a Phosphoserine. At Thr301 the chain carries Phosphothreonine. A compositionally biased stretch (basic and acidic residues) spans 306 to 317 (DSRPPGRPAEVH). Ser329 carries the phosphoserine modification. Thr331 is modified (phosphothreonine). Residues 355 to 387 (GVGTRGPGAPGLAHLQESQAGSDTDVEEGKAPQ) form a disordered region. Phosphoserine occurs at positions 372 and 376. Phosphothreonine is present on Thr378. A phosphoserine mark is found at Ser394, Ser397, and Ser402. Thr404 carries the phosphothreonine modification. The residue at position 411 (Ser411) is a Phosphoserine. Disordered regions lie at residues 443–469 (QRSQTTTERDSDTDVEEEELPVENREA) and 481–522 (VRAH…VDIN). Position 449 is a phosphothreonine (Thr449). Ser453 bears the Phosphoserine mark. Thr455 bears the Phosphothreonine mark. Ser485, Ser495, Ser498, Ser504, Ser505, and Ser513 each carry phosphoserine. The segment covering 513 to 522 (SQASTTVDIN) has biased composition (polar residues). At Thr523 the chain carries Phosphothreonine. The residue at position 590 (Ser590) is a Phosphoserine. A Glycyl lysine isopeptide (Lys-Gly) (interchain with G-Cter in SUMO1); alternate cross-link involves residue Lys616. Lys616 participates in a covalent cross-link: Glycyl lysine isopeptide (Lys-Gly) (interchain with G-Cter in SUMO2); alternate. Disordered regions lie at residues 653–689 (DTLGESTQPQREGAQVPTGREREQHVGGTKDSEDNYG) and 780–1969 (SPPR…TKLN). Residues 671 to 685 (GREREQHVGGTKDSE) are compositionally biased toward basic and acidic residues. Ser780 and Ser793 each carry phosphoserine. Position 812 is an N6-acetyllysine (Lys812). Composition is skewed to basic and acidic residues over residues 819 to 844 (ETAERVGPERGPLERETEKLLPERQT), 851 to 862 (ELTKGKQDREQK), 868 to 905 (DTQRQESDKNGESASPERDRESLKVEIETSEEIQEKQV), and 914 to 951 (AFEREVERPVANRECDPAELEEKVPKVILERDTQRGEP). Ser955 and Ser998 each carry phosphoserine. Polar residues predominate over residues 955–964 (SQDQKGQASS). Over residues 1016-1031 (KASRIRAAEKVSRGDQ) the composition is skewed to basic and acidic residues. Ser1033 is subject to Phosphoserine. Positions 1040-1051 (PTVPEAPAPPQK) are enriched in pro residues. 2 positions are modified to phosphoserine: Ser1068 and Ser1086. Residues 1103–1113 (PKPKIRTRKSS) are compositionally biased toward basic residues. Composition is skewed to polar residues over residues 1129-1157 (PSTSTAQPVTPKPTSQATRSRTNRSSVKT) and 1170-1187 (PCTSTDQPVTSEPTSQVT). An interaction with the PRKDC complex region spans residues 1148 to 1692 (SRTNRSSVKT…TNRSSVKTPE (545 aa)). Thr1157 carries the phosphothreonine modification. Residue Thr1198 is modified to Phosphothreonine. Residues 1210–1227 (QPSTSTDRPVTSEPTSHA) are compositionally biased toward polar residues. Ser1235 is modified (phosphoserine). Thr1239 carries the post-translational modification Phosphothreonine. Positions 1251–1268 (QPSTSTDQPVTSEPTYQA) are enriched in polar residues. A phosphothreonine mark is found at Thr1280 and Thr1302. Residues 1306 to 1318 (TSRTTRSRTNMSS) show a composition bias toward low complexity. 2 stretches are compositionally biased toward polar residues: residues 1334–1350 (PSTSTEQPVTPEPTSRA) and 1375–1403 (PSTSTDQPVTPEPTSQATRGRTNRSSVKT). Residues 1429–1441 (TSRTTRSRTNMSS) show a composition bias toward low complexity. Residues 1457 to 1473 (PSTSTEQPVTPEPTSRA) are compositionally biased toward polar residues. A phosphoserine mark is found at Ser1481 and Ser1482. Lys1484 is modified (N6-acetyllysine). A Phosphothreonine modification is found at Thr1485. Lys1495 participates in a covalent cross-link: Glycyl lysine isopeptide (Lys-Gly) (interchain with G-Cter in SUMO1); alternate. Lys1495 participates in a covalent cross-link: Glycyl lysine isopeptide (Lys-Gly) (interchain with G-Cter in SUMO2); alternate. Polar residues-rich tracts occupy residues 1498–1526 (PSTSTDQPVTPEPTSQATRGRTNRSSVKT), 1538–1557 (QPSTSTDQPVTPEPTSQVTR), and 1580–1596 (ASASTDQPVTSEPTSRT). Residues Thr1507 and Thr1548 each carry the phosphothreonine modification. Thr1615 and Thr1630 each carry phosphothreonine. Composition is skewed to polar residues over residues 1620–1649 (QPSTSTDQPVTPEPTSQATRGRTNRSSVKT) and 1661–1678 (QPSTSRNQLVTPEPTSRA). Ser1646 is modified (phosphoserine). Phosphothreonine occurs at positions 1649 and 1671. Phosphoserine is present on Ser1686. At Thr1690 the chain carries Phosphothreonine. Positions 1693–1702 (PVVPTAPEPH) are enriched in pro residues. Over residues 1706–1718 (STDQPVTPKLTSR) the composition is skewed to polar residues. Thr1712, Thr1746, and Thr1753 each carry phosphothreonine. Residues 1760–1771 (GGQSKTLRSSTV) are compositionally biased toward polar residues. A Phosphoserine modification is found at Ser1763. Thr1779 carries the post-translational modification Phosphothreonine. Over residues 1780 to 1801 (PEFQSPVTTDQPISPEPITQPS) the composition is skewed to polar residues. The tract at residues 1780-2171 (PEFQSPVTTD…VLSPLEMSST (392 aa)) is required for nuclear localization (NLS2). Ser1784 and Ser1793 each carry phosphoserine. A Glycyl lysine isopeptide (Lys-Gly) (interchain with G-Cter in SUMO2) cross-link involves residue Lys1822. Ser1857 is subject to Phosphoserine. A Glycyl lysine isopeptide (Lys-Gly) (interchain with G-Cter in SUMO2) cross-link involves residue Lys1872. At Thr1882 the chain carries Phosphothreonine. Ser1902 carries the phosphoserine modification. Polar residues predominate over residues 1905–1918 (HQKQPQRGEVSQKT). Residue Lys1922 forms a Glycyl lysine isopeptide (Lys-Gly) (interchain with G-Cter in SUMO1); alternate linkage. A Glycyl lysine isopeptide (Lys-Gly) (interchain with G-Cter in SUMO2); alternate cross-link involves residue Lys1922. A compositionally biased stretch (basic and acidic residues) spans 1929–1939 (AEKPGKEEDVV). A Phosphothreonine modification is found at Thr1940. BRCT domains lie at 1974–2052 (APKV…EYVV) and 2073–2164 (RERR…FVLS). Residue Arg2025 is modified to Omega-N-methylarginine.

In terms of assembly, homodimer. Interacts with H2AX, which requires phosphorylation of H2AX on 'Ser-139'. Interacts with the MRN complex, composed of MRE11, RAD50, and NBN. Interacts with CHEK2, which requires ATM-mediated phosphorylation of 'Thr-68' within the FHA domain of CHEK2. Interacts constitutively with the BRCA1-BARD1 complex, SMC1A and TP53BP1. Interacts with ATM and FANCD2, and these interactions are reduced upon DNA damage. Also interacts with the PRKDC complex, composed of XRCC6/KU70, XRCC5/KU80 and PRKDC/XRCC7. This interaction may be required for PRKDC autophosphorylation, which is essential for DNA double strand break (DSB) repair. When phosphorylated by ATM, interacts with RNF8 (via FHA domain). Interacts with CEP164. When phosphorylated, interacts with APTX (via FHA-like domain). Interacts (when phosphorylated) with TOPBP1; promoting TOPBP1 localization to DNA damage sites during mitosis. Interacts (when phosphorylated) with NBN; promoting NBN and MRN complex localization to DNA damage sites. Post-translationally, phosphorylated upon exposure to ionizing radiation (IR), ultraviolet radiation (UV), and hydroxyurea (HU). Phosphorylation in response to IR requires ATM, NBN, and possibly CHEK2. Also phosphorylated during the G2/M phase of the cell cycle and during activation of the mitotic spindle checkpoint. Phosphorylation at Thr-4 by ATM stabilizes and enhances homodimerization via the FHA domain. Phosphorylated at Ser-168 and Ser-196 by CK2 in response to DNA damage during mitosis, promoting interaction with TOPBP1. Phosphorylated by CK2 in response to DNA damage, promoting interaction with NBN and recruitment of the MRN complex to DNA damage sites. In terms of processing, sumoylation at Lys-1922 by PIAS4 following DNA damage promotes ubiquitin-mediated degradation. Ubiquitinated by RNF4, leading to proteasomal degradation; undergoes 'Lys-48'-linked polyubiquitination.

It localises to the nucleus. The protein resides in the chromosome. Histone reader protein required for checkpoint-mediated cell cycle arrest in response to DNA damage within both the S phase and G2/M phases of the cell cycle. Specifically recognizes and binds histone H2AX phosphorylated at 'Ser-139', a marker of DNA damage, serving as a scaffold for the recruitment of DNA repair and signal transduction proteins to discrete foci of DNA damage sites. Also required for downstream events subsequent to the recruitment of these proteins. These include phosphorylation and activation of the ATM, CHEK1 and CHEK2 kinases, and stabilization of TP53/p53 and apoptosis. ATM and CHEK2 may also be activated independently by a parallel pathway mediated by TP53BP1. Required for chromosomal stability during mitosis by promoting recruitment of TOPBP1 to DNA double strand breaks (DSBs): TOPBP1 forms filamentous assemblies that bridge MDC1 and tether broken chromosomes during mitosis. Required for the repair of DSBs via homologous recombination by promoting recruitment of NBN component of the MRN complex to DSBs. The chain is Mediator of DNA damage checkpoint protein 1 (MDC1) from Pan troglodytes (Chimpanzee).